We begin with the raw amino-acid sequence, 252 residues long: Probable endonuclease 4 (252 aa).

Zn(2+)-binding residues include H56, H96, E129, D162, H165, H191, D204, H206, and E233.

Belongs to the AP endonuclease 2 family. Requires Zn(2+) as cofactor.

The enzyme catalyses Endonucleolytic cleavage to 5'-phosphooligonucleotide end-products.. Functionally, endonuclease IV plays a role in DNA repair. It cleaves phosphodiester bonds at apurinic or apyrimidinic (AP) sites, generating a 3'-hydroxyl group and a 5'-terminal sugar phosphate. This is Probable endonuclease 4 from Mycobacterium ulcerans (strain Agy99).